The primary structure comprises 720 residues: Polyribonucleotide nucleotidyltransferase (720 aa).

Mg(2+)-binding residues include Asp-484 and Asp-490. The region spanning 551 to 610 is the KH domain; the sequence is PRMYKISIDPSKIGSVIGSGGKTIRSIIEQTNTTVDIENDGTVVIGATDEASAQKAIKII. The region spanning 620 to 688 is the S1 motif domain; that stretch reads GSVYTGKVTR…SQGRINLSRR (69 aa). Residues 697–720 are disordered; the sequence is PISRNRDSQPRRSGPFRPQDRSNS.

This sequence belongs to the polyribonucleotide nucleotidyltransferase family. The cofactor is Mg(2+).

The protein resides in the cytoplasm. The catalysed reaction is RNA(n+1) + phosphate = RNA(n) + a ribonucleoside 5'-diphosphate. Its function is as follows. Involved in mRNA degradation. Catalyzes the phosphorolysis of single-stranded polyribonucleotides processively in the 3'- to 5'-direction. This chain is Polyribonucleotide nucleotidyltransferase, found in Dehalococcoides mccartyi (strain ATCC BAA-2266 / KCTC 15142 / 195) (Dehalococcoides ethenogenes (strain 195)).